Consider the following 277-residue polypeptide: Ubiquinone biosynthesis protein COQ4, mitochondrial (277 aa).

The N-terminal 14 residues, 1–14 (MLTKRALRTTDPYR), are a transit peptide targeting the mitochondrion. 4 residues coordinate Zn(2+): histidine 157, aspartate 158, histidine 161, and glutamate 173.

It belongs to the COQ4 family. Component of a multi-subunit COQ enzyme complex, composed of at least COQ3, COQ4, COQ5, COQ6, COQ7 and COQ9. Requires Zn(2+) as cofactor.

Its subcellular location is the mitochondrion inner membrane. It catalyses the reaction a 4-hydroxy-3-methoxy-5-(all-trans-polyprenyl)benzoate + H(+) = a 2-methoxy-6-(all-trans-polyprenyl)phenol + CO2. The protein operates within cofactor biosynthesis; ubiquinone biosynthesis. In terms of biological role, lyase that catalyzes the C1-decarboxylation of 4-hydroxy-3-methoxy-5-(all-trans-polyprenyl)benzoic acid into 2-methoxy-6-(all-trans-polyprenyl)phenol during ubiquinone biosynthesis. This Ajellomyces capsulatus (strain NAm1 / WU24) (Darling's disease fungus) protein is Ubiquinone biosynthesis protein COQ4, mitochondrial.